Here is a 147-residue protein sequence, read N- to C-terminus: Hemoglobin subunit gamma (147 aa).

A Globin domain is found at N3–H147. Heme b-binding residues include H64 and H93.

It belongs to the globin family. As to quaternary structure, heterotetramer of two alpha chains and two gamma chains in fetal hemoglobin (Hb F). In terms of tissue distribution, red blood cells.

Its function is as follows. Gamma chains make up the fetal hemoglobin F, in combination with alpha chains. The polypeptide is Hemoglobin subunit gamma (HBG) (Alouatta seniculus (Red howler monkey)).